The sequence spans 158 residues: Protein-export protein SecB (158 aa).

It belongs to the SecB family. In terms of assembly, homotetramer, a dimer of dimers. One homotetramer interacts with 1 SecA dimer.

It localises to the cytoplasm. In terms of biological role, one of the proteins required for the normal export of preproteins out of the cell cytoplasm. It is a molecular chaperone that binds to a subset of precursor proteins, maintaining them in a translocation-competent state. It also specifically binds to its receptor SecA. The polypeptide is Protein-export protein SecB (Yersinia pestis (strain Pestoides F)).